We begin with the raw amino-acid sequence, 264 residues long: S-adenosylmethionine decarboxylase proenzyme (264 aa).

S113 functions as the Schiff-base intermediate with substrate; via pyruvic acid in the catalytic mechanism. The residue at position 113 (S113) is a Pyruvic acid (Ser); by autocatalysis. The Proton acceptor; for processing activity role is filled by H118. C141 serves as the catalytic Proton donor; for catalytic activity.

It belongs to the prokaryotic AdoMetDC family. Type 2 subfamily. Heterooctamer of four alpha and four beta chains arranged as a tetramer of alpha/beta heterodimers. Requires pyruvate as cofactor. In terms of processing, is synthesized initially as an inactive proenzyme. Formation of the active enzyme involves a self-maturation process in which the active site pyruvoyl group is generated from an internal serine residue via an autocatalytic post-translational modification. Two non-identical subunits are generated from the proenzyme in this reaction, and the pyruvate is formed at the N-terminus of the alpha chain, which is derived from the carboxyl end of the proenzyme. The post-translation cleavage follows an unusual pathway, termed non-hydrolytic serinolysis, in which the side chain hydroxyl group of the serine supplies its oxygen atom to form the C-terminus of the beta chain, while the remainder of the serine residue undergoes an oxidative deamination to produce ammonia and the pyruvoyl group blocking the N-terminus of the alpha chain.

The enzyme catalyses S-adenosyl-L-methionine + H(+) = S-adenosyl 3-(methylsulfanyl)propylamine + CO2. It functions in the pathway amine and polyamine biosynthesis; S-adenosylmethioninamine biosynthesis; S-adenosylmethioninamine from S-adenosyl-L-methionine: step 1/1. In terms of biological role, catalyzes the decarboxylation of S-adenosylmethionine to S-adenosylmethioninamine (dcAdoMet), the propylamine donor required for the synthesis of the polyamines spermine and spermidine from the diamine putrescine. This chain is S-adenosylmethionine decarboxylase proenzyme, found in Stenotrophomonas maltophilia (strain R551-3).